We begin with the raw amino-acid sequence, 762 residues long: 5-methyltetrahydropteroyltriglutamate--homocysteine methyltransferase (762 aa).

5-methyltetrahydropteroyltri-L-glutamate is bound by residues Arg16–Lys19 and Lys118. Residues Ile439–Ser441 and Glu492 contribute to the L-homocysteine site. Residues Ile439–Ser441 and Glu492 contribute to the L-methionine site. 5-methyltetrahydropteroyltri-L-glutamate contacts are provided by residues Arg523–Cys524 and Trp569. Asp607 serves as a coordination point for L-homocysteine. Asp607 is a binding site for L-methionine. Glu613 is a binding site for 5-methyltetrahydropteroyltri-L-glutamate. Zn(2+) contacts are provided by His649, Cys651, and Glu673. Catalysis depends on His702, which acts as the Proton donor. Cys734 contributes to the Zn(2+) binding site.

Belongs to the vitamin-B12 independent methionine synthase family. The cofactor is Zn(2+).

The catalysed reaction is 5-methyltetrahydropteroyltri-L-glutamate + L-homocysteine = tetrahydropteroyltri-L-glutamate + L-methionine. It functions in the pathway amino-acid biosynthesis; L-methionine biosynthesis via de novo pathway; L-methionine from L-homocysteine (MetE route): step 1/1. Its function is as follows. Catalyzes the transfer of a methyl group from 5-methyltetrahydrofolate to homocysteine resulting in methionine formation. The protein is 5-methyltetrahydropteroyltriglutamate--homocysteine methyltransferase of Pseudomonas entomophila (strain L48).